A 119-amino-acid chain; its full sequence is Ribosome-binding factor A (119 aa).

This sequence belongs to the RbfA family. In terms of assembly, monomer. Binds 30S ribosomal subunits, but not 50S ribosomal subunits or 70S ribosomes.

The protein localises to the cytoplasm. One of several proteins that assist in the late maturation steps of the functional core of the 30S ribosomal subunit. Associates with free 30S ribosomal subunits (but not with 30S subunits that are part of 70S ribosomes or polysomes). Required for efficient processing of 16S rRNA. May interact with the 5'-terminal helix region of 16S rRNA. The polypeptide is Ribosome-binding factor A (Lactococcus lactis subsp. cremoris (strain SK11)).